A 414-amino-acid chain; its full sequence is Eukaryotic initiation factor 4A-3 (414 aa).

Ala2 is subject to N-acetylalanine. A Q motif motif is present at residues 41–69 (DSFDAMELQPDLLRGIYAYGFEKPSAIQQ). The Helicase ATP-binding domain occupies 72-242 (IIPFCKGLDV…RKFMNKPVRI (171 aa)). 85 to 92 (AQSGTGKT) provides a ligand contact to ATP. Ser106 carries the phosphoserine modification. Thr147 is subject to Phosphothreonine. The DEAD box signature appears at 190 to 193 (DEAD). The 162-residue stretch at 253-414 (GIKQFYVNVD…ELPSNVADLL (162 aa)) folds into the Helicase C-terminal domain.

The protein belongs to the DEAD box helicase family. eIF4A subfamily. In terms of assembly, eIF4F is a multi-subunit complex, the composition of which varies with external and internal environmental conditions. It is composed of at least EIF4A, EIF4E and EIF4G.

The protein localises to the cytoplasm. The catalysed reaction is ATP + H2O = ADP + phosphate + H(+). ATP-dependent RNA helicase which is a subunit of the eIF4F complex involved in cap recognition and is required for mRNA binding to ribosome. In the current model of translation initiation, eIF4A unwinds RNA secondary structures in the 5'-UTR of mRNAs which is necessary to allow efficient binding of the small ribosomal subunit, and subsequent scanning for the initiator codon. In Arabidopsis thaliana (Mouse-ear cress), this protein is Eukaryotic initiation factor 4A-3 (TIF4A-3).